Consider the following 579-residue polypeptide: Nuclear hormone receptor family member nhr-71 (579 aa).

Residues S8–P83 constitute a DNA-binding region (nuclear receptor). 2 NR C4-type zinc fingers span residues C11 to C31 and C47 to C71. Disordered regions lie at residues Q82–P124 and E168–D189. Polar residues-rich tracts occupy residues S106–P124 and P171–P186. The 264-residue stretch at D189–A452 folds into the NR LBD domain.

The protein belongs to the nuclear hormone receptor family.

It is found in the nucleus. Its function is as follows. Orphan nuclear receptor. In Caenorhabditis elegans, this protein is Nuclear hormone receptor family member nhr-71 (nhr-71).